A 196-amino-acid chain; its full sequence is ATP-dependent Clp protease proteolytic subunit (196 aa).

The active-site Nucleophile is the Ser98. His123 is an active-site residue.

This sequence belongs to the peptidase S14 family. In terms of assembly, fourteen ClpP subunits assemble into 2 heptameric rings which stack back to back to give a disk-like structure with a central cavity, resembling the structure of eukaryotic proteasomes.

It localises to the cytoplasm. The enzyme catalyses Hydrolysis of proteins to small peptides in the presence of ATP and magnesium. alpha-casein is the usual test substrate. In the absence of ATP, only oligopeptides shorter than five residues are hydrolyzed (such as succinyl-Leu-Tyr-|-NHMec, and Leu-Tyr-Leu-|-Tyr-Trp, in which cleavage of the -Tyr-|-Leu- and -Tyr-|-Trp bonds also occurs).. In terms of biological role, cleaves peptides in various proteins in a process that requires ATP hydrolysis. Has a chymotrypsin-like activity. Plays a major role in the degradation of misfolded proteins. The sequence is that of ATP-dependent Clp protease proteolytic subunit from Limosilactobacillus fermentum (strain NBRC 3956 / LMG 18251) (Lactobacillus fermentum).